The following is an 88-amino-acid chain: Large ribosomal subunit protein bL27 (88 aa).

Residues 1-21 (MAHKKGASSSRNGRDSNAKRL) form a disordered region.

It belongs to the bacterial ribosomal protein bL27 family.

The protein is Large ribosomal subunit protein bL27 of Thermobifida fusca (strain YX).